The primary structure comprises 203 residues: Protein-methionine-sulfoxide reductase heme-binding subunit MsrQ (203 aa).

A run of 6 helical transmembrane segments spans residues 10 to 30 (IFVL…MGLL), 37 to 57 (IMMD…LSMT), 75 to 95 (LGLW…VFIL), 110 to 130 (PYII…VTSN), 147 to 167 (LVYV…RSDL), and 169 to 189 (EWAI…PPVW).

Belongs to the MsrQ family. As to quaternary structure, heterodimer of a catalytic subunit (MsrP) and a heme-binding subunit (MsrQ). It depends on FMN as a cofactor. The cofactor is heme b.

It is found in the cell inner membrane. Functionally, part of the MsrPQ system that repairs oxidized periplasmic proteins containing methionine sulfoxide residues (Met-O), using respiratory chain electrons. Thus protects these proteins from oxidative-stress damage caused by reactive species of oxygen and chlorine generated by the host defense mechanisms. MsrPQ is essential for the maintenance of envelope integrity under bleach stress, rescuing a wide series of structurally unrelated periplasmic proteins from methionine oxidation. MsrQ provides electrons for reduction to the reductase catalytic subunit MsrP, using the quinone pool of the respiratory chain. In Pseudomonas entomophila (strain L48), this protein is Protein-methionine-sulfoxide reductase heme-binding subunit MsrQ.